We begin with the raw amino-acid sequence, 493 residues long: MLVLDRDADVPMHRQLYEKLRAEILAGHLKADTRLPPTRMMAEDLGVSRNTVITTYDALLAEGYLESRSGSGTWVATLPPDAVTARNSVGRAGAPSLSSRGMRMAAQPRDRTIPDRIAFHPGYPEIKAFPFSTWARLLKRHARYSHEDLYGYHWVTGHPRLKAAIAEYLRASRGVECAPEQVIVVNGTQAALDILARMLVDEGDICWMEEPGYIGAQNSLLSAGAKLVPLPVERDGWSLEDETRPSPRLIFVTPSCQWPLGCLMRMEDRLRLLQIGERHDAWIVEDDYDSEYRFRGRPVPAMQGLDKSGRVIYMGTFAKTLFPSLRIGFIVVPPQLADGFKRVVSNTGHYPSLLLQAALADFISEGYFATHLRRMRRLYAERQKVFVALCRRHLADWLTIDENDAGMQLVARFTRALEDEVLWRAAQGQGVNFSPLSRQFFHSPPQQGAILGYAGIDPKTMREGINSLRSAFLALESSGALPLDRATAAPRGC.

An HTH gntR-type domain is found at 10-78; that stretch reads VPMHRQLYEK…SGSGTWVATL (69 aa). The H-T-H motif DNA-binding region spans 38–57; sequence TRMMAEDLGVSRNTVITTYD. Position 319 is an N6-(pyridoxal phosphate)lysine (Lys-319).

In the C-terminal section; belongs to the class-I pyridoxal-phosphate-dependent aminotransferase family. The cofactor is pyridoxal 5'-phosphate.

In terms of biological role, could play a regulatory role in the transcription of the moc genes for rhizopine catabolism. Could also have an aminotransferase activity. This Rhizobium meliloti (Ensifer meliloti) protein is Probable rhizopine catabolism regulatory protein MocR (mocR).